A 423-amino-acid chain; its full sequence is Putative competence-damage inducible protein (423 aa).

Belongs to the CinA family.

The sequence is that of Putative competence-damage inducible protein from Streptococcus pyogenes serotype M49 (strain NZ131).